Here is an 817-residue protein sequence, read N- to C-terminus: Protein-glutamine gamma-glutamyltransferase K (817 aa).

Disordered regions lie at residues 1-38 and 59-105; these read MMDGPRSDVGRWGGNPLQPPTTPSPEPEPEPDGRSRRG and DDWG…DGTI. Positions 1–100 are membrane anchorage region; sequence MMDGPRSDVG…VSRGSGVNAA (100 aa). Residues 17 to 26 show a composition bias toward pro residues; the sequence is LQPPTTPSPE. Threonine 22 carries the post-translational modification Phosphothreonine. Residues serine 24, serine 68, serine 82, serine 85, serine 92, and serine 95 each carry the phosphoserine modification. Over residues 71 to 84 the composition is skewed to low complexity; the sequence is RGSSSGTRRPGSRG. Catalysis depends on residues cysteine 377, histidine 436, and aspartate 459. Positions 499, 501, 548, and 553 each coordinate Ca(2+). A disordered region spans residues 793 to 817; sequence GGFFSDAGGDSHLGETIPMASRGGA.

It belongs to the transglutaminase superfamily. Transglutaminase family. In terms of assembly, interacts with PLAAT4. Requires Ca(2+) as cofactor. Palmitoylated. In terms of processing, the membrane anchorage region possesses a cluster of five cysteines within which fatty acid(s) may become thioester-linked. It is subject to phorbol ester-stimulated phosphorylation and is hypersensitive to proteolysis, which releases the enzyme in a soluble form. Post-translationally, tyrosine-phosphorylated.

It is found in the membrane. It carries out the reaction L-glutaminyl-[protein] + L-lysyl-[protein] = [protein]-L-lysyl-N(6)-5-L-glutamyl-[protein] + NH4(+). In terms of biological role, catalyzes the cross-linking of proteins and the conjugation of polyamines to proteins. Responsible for cross-linking epidermal proteins during formation of the stratum corneum. Involved in cell proliferation. The chain is Protein-glutamine gamma-glutamyltransferase K (TGM1) from Homo sapiens (Human).